A 311-amino-acid chain; its full sequence is tRNA-cytidine(32) 2-sulfurtransferase (311 aa).

The short motif at 47–52 is the PP-loop motif element; sequence SGGKDS. 3 residues coordinate [4Fe-4S] cluster: Cys-122, Cys-125, and Cys-213.

Belongs to the TtcA family. In terms of assembly, homodimer. The cofactor is Mg(2+). It depends on [4Fe-4S] cluster as a cofactor.

Its subcellular location is the cytoplasm. The catalysed reaction is cytidine(32) in tRNA + S-sulfanyl-L-cysteinyl-[cysteine desulfurase] + AH2 + ATP = 2-thiocytidine(32) in tRNA + L-cysteinyl-[cysteine desulfurase] + A + AMP + diphosphate + H(+). The protein operates within tRNA modification. In terms of biological role, catalyzes the ATP-dependent 2-thiolation of cytidine in position 32 of tRNA, to form 2-thiocytidine (s(2)C32). The sulfur atoms are provided by the cysteine/cysteine desulfurase (IscS) system. In Salmonella typhimurium (strain LT2 / SGSC1412 / ATCC 700720), this protein is tRNA-cytidine(32) 2-sulfurtransferase.